The primary structure comprises 463 residues: MQLCIISLWFLAAFIVNADNVQFEDYESNFFFKEHLGTLSPYHEPYFDGLDSAFPETCEIQQVHLLQRHGSRNPTGDVTATDVYSSQYLNNFQEKLLNGSIPVNFSYPENPLCFIKQWTPVIDAENADQLSSRGRLELFDLGRQLYQRYYKLFDSYVYDINTAEQERVVESAKWFTYGLFGDKMYEKTNFILISEGKAAGANSLSMYNACPVFKDNNFHKNATDAAHAVWRNIFIEPIVNRLAKYFDSSYKLTINDVRSLFYICEYEIAIKDHSDFCSIFTPSEFLNFEYDSDLDQAYGGGPVSEWASTLGGAYINNLADSLRNVTNPDFDRKVFLAFTHDSNIIPVEAALGFFPDITPQNPLPTDKNIYTYSQKTSSFVPFAGNLITELFFCSDSKYYVRHLVNQQVYPLIDCGYGPSGTSDGLCELQAYLNSPIRANSTSNGISIFNTECQARPTNVTIYF.

Positions Met-1–Ala-18 are cleaved as a signal peptide. The active-site Nucleophile is the His-69. N-linked (GlcNAc...) asparagine glycans are attached at residues Asn-98, Asn-104, Asn-221, and Asn-324. Catalysis depends on Asp-341, which acts as the Proton donor. N-linked (GlcNAc...) asparagine glycans are attached at residues Asn-439 and Asn-458.

Belongs to the histidine acid phosphatase family.

Its subcellular location is the secreted. It localises to the cell wall. It carries out the reaction a phosphate monoester + H2O = an alcohol + phosphate. May dephosphorylate thiamine phosphates. This is Thiamine-repressible acid phosphatase SPBC21H7.03c from Schizosaccharomyces pombe (strain 972 / ATCC 24843) (Fission yeast).